Here is a 764-residue protein sequence, read N- to C-terminus: MLHTMQLLLLATIVGMVRSSPYTSYQNQRFAMEPQDQTAVVGARVTLPCRVINKQGTLQWTKDDFGLGTSRDLSGFERYAMVGSDEEGDYSLDIYPVMLDDDARYQCQVSPGPEGQPAIRSTFAGLTVLVPPEAPKITQGDVIYATEDRKVEIECVSVGGKPAAEITWIDGLGNVLTDNIEYTVIPLPDQRRFTAKSVLRLTPKKEHHNTNFSCQAQNTADRTYRSAKIRVEVKYAPKVKVNVMGSLPGGAGGSVGGAGGGSVHMSTGSRIVEHSQVRLECRADANPSDVRYRWFINDEPIIGGQKTEMVIRNVTRKFHDAIVKCEVQNSVGKSEDSETLDISYAPSFRQRPQSMEADVGSVVSLTCEVDSNPQPEIVWIQHPSDRVVGTSTNLTFSVSNETAGRYYCKANVPGYAEISADAYVYLKGSPAIGSQRTQYGLVGDTARIECFASSVPRARHVSWTFNGQEISSESGHDYSILVDAVPGGVKSTLIIRDSQAYHYGKYNCTVVNDYGNDVAEIQLQAKKSVSLLMTIVGGISVVAFLLVLTILVVVYIKCKKRTKLPPADVISEHQITKNGGVSCKLEPGDRTSNYSDLKVDISGGYVPYGDYSTHYSPPPQYLTTCSTKSNGSSTIMQNNHQNQLQLQQQQQQSHHQHHTQTTTLPMTFLTNSSGGSLTGSIIGSREIRQDNGLPSLQSTTASVVSSSPNGSCSNQSTTAATTTTTHVVVPSSMALSVDPRYSAIYGNPYLRSSNSSLLPPPTAV.

The signal sequence occupies residues 1-19 (MLHTMQLLLLATIVGMVRS). The Extracellular portion of the chain corresponds to 20–533 (SPYTSYQNQR…QAKKSVSLLM (514 aa)). Ig-like C2-type domains lie at 21–120 (PYTS…PAIR), 132–230 (PEAP…AKIR), 237–343 (PKVK…LDIS), 346–419 (PSFR…AEIS), and 430–530 (PAIG…KSVS). 5 cysteine pairs are disulfide-bonded: C49–C107, C155–C214, C281–C325, C367–C408, and C450–C508. Residues N211, N313, N393, N400, and N507 are each glycosylated (N-linked (GlcNAc...) asparagine). The chain crosses the membrane as a helical span at residues 534–556 (TIVGGISVVAFLLVLTILVVVYI). Topologically, residues 557 to 764 (KCKKRTKLPP…SSLLPPPTAV (208 aa)) are cytoplasmic. Disordered stretches follow at residues 640–660 (HQNQLQLQQQQQQSHHQHHTQ) and 691–719 (NGLPSLQSTTASVVSSSPNGSCSNQSTTA). Over residues 692–701 (GLPSLQSTTA) the composition is skewed to polar residues. Over residues 702–719 (SVVSSSPNGSCSNQSTTA) the composition is skewed to low complexity.

As to expression, postembryonic expression is strong in the developing optic lobe and in the eye imaginal disk.

Its subcellular location is the membrane. Its function is as follows. Required for correct axonal pathway formation in the optic lobe and for programmed cell death in the developing retina. This Drosophila melanogaster (Fruit fly) protein is Irregular chiasm C-roughest protein (rst).